Consider the following 318-residue polypeptide: Phosphatidylglycerol--prolipoprotein diacylglyceryl transferase (318 aa).

3 helical membrane-spanning segments follow: residues 24-44, 60-80, and 115-135; these read GPSTFSILMMIGFLTASYLLP, LLLLGILGTLVGAKIFFVFEI, and LFSGSGLVFYGGFLFGILFIT. Arginine 164 provides a ligand contact to a 1,2-diacyl-sn-glycero-3-phospho-(1'-sn-glycerol). Helical transmembrane passes span 198–218 and 285–305; these read VPVWNTPLIESIISFLFFFYF and GFSQSQLVSIIIILVGAFFIL.

Belongs to the Lgt family.

The protein resides in the cell inner membrane. It catalyses the reaction L-cysteinyl-[prolipoprotein] + a 1,2-diacyl-sn-glycero-3-phospho-(1'-sn-glycerol) = an S-1,2-diacyl-sn-glyceryl-L-cysteinyl-[prolipoprotein] + sn-glycerol 1-phosphate + H(+). The protein operates within protein modification; lipoprotein biosynthesis (diacylglyceryl transfer). Its function is as follows. Catalyzes the transfer of the diacylglyceryl group from phosphatidylglycerol to the sulfhydryl group of the N-terminal cysteine of a prolipoprotein, the first step in the formation of mature lipoproteins. The sequence is that of Phosphatidylglycerol--prolipoprotein diacylglyceryl transferase from Leptospira interrogans serogroup Icterohaemorrhagiae serovar copenhageni (strain Fiocruz L1-130).